Reading from the N-terminus, the 384-residue chain is S-adenosylmethionine synthase (384 aa).

An ATP-binding site is contributed by histidine 15. Aspartate 17 contributes to the Mg(2+) binding site. Glutamate 43 is a binding site for K(+). 2 residues coordinate L-methionine: glutamate 56 and glutamine 99. Residues 99-109 (QSPDINQGVDR) are flexible loop. ATP is bound by residues 164–166 (DAK), 231–232 (RF), aspartate 240, 246–247 (RK), alanine 263, and lysine 267. Aspartate 240 provides a ligand contact to L-methionine. L-methionine is bound at residue lysine 271.

Belongs to the AdoMet synthase family. As to quaternary structure, homotetramer; dimer of dimers. Requires Mg(2+) as cofactor. The cofactor is K(+).

The protein localises to the cytoplasm. It catalyses the reaction L-methionine + ATP + H2O = S-adenosyl-L-methionine + phosphate + diphosphate. It functions in the pathway amino-acid biosynthesis; S-adenosyl-L-methionine biosynthesis; S-adenosyl-L-methionine from L-methionine: step 1/1. In terms of biological role, catalyzes the formation of S-adenosylmethionine (AdoMet) from methionine and ATP. The overall synthetic reaction is composed of two sequential steps, AdoMet formation and the subsequent tripolyphosphate hydrolysis which occurs prior to release of AdoMet from the enzyme. This chain is S-adenosylmethionine synthase, found in Shewanella woodyi (strain ATCC 51908 / MS32).